A 212-amino-acid polypeptide reads, in one-letter code: uncharacterized protein (212 aa).

Positions 53, 74, and 97 each coordinate S-adenosyl-L-methionine.

Belongs to the methyltransferase superfamily. YrrT family.

Functionally, could be a S-adenosyl-L-methionine-dependent methyltransferase. This is an uncharacterized protein from Bacillus thuringiensis (strain Al Hakam).